The sequence spans 258 residues: Aspartate/glutamate leucyltransferase (258 aa).

The protein belongs to the R-transferase family. Bpt subfamily.

It localises to the cytoplasm. It carries out the reaction N-terminal L-glutamyl-[protein] + L-leucyl-tRNA(Leu) = N-terminal L-leucyl-L-glutamyl-[protein] + tRNA(Leu) + H(+). The enzyme catalyses N-terminal L-aspartyl-[protein] + L-leucyl-tRNA(Leu) = N-terminal L-leucyl-L-aspartyl-[protein] + tRNA(Leu) + H(+). Functionally, functions in the N-end rule pathway of protein degradation where it conjugates Leu from its aminoacyl-tRNA to the N-termini of proteins containing an N-terminal aspartate or glutamate. In Bradyrhizobium sp. (strain ORS 278), this protein is Aspartate/glutamate leucyltransferase.